The primary structure comprises 279 residues: Shikimate dehydrogenase (NADP(+)) (279 aa).

Shikimate-binding positions include 20 to 22 and Thr67; that span reads SRS. Lys71 serves as the catalytic Proton acceptor. Asp83 contributes to the NADP(+) binding site. Shikimate-binding residues include Asn92 and Asp108. Residues 134–138 and Leu223 each bind NADP(+); that span reads GAGGA. A shikimate-binding site is contributed by Tyr225. Residue Gly246 participates in NADP(+) binding.

This sequence belongs to the shikimate dehydrogenase family. In terms of assembly, homodimer.

It carries out the reaction shikimate + NADP(+) = 3-dehydroshikimate + NADPH + H(+). It functions in the pathway metabolic intermediate biosynthesis; chorismate biosynthesis; chorismate from D-erythrose 4-phosphate and phosphoenolpyruvate: step 4/7. Involved in the biosynthesis of the chorismate, which leads to the biosynthesis of aromatic amino acids. Catalyzes the reversible NADPH linked reduction of 3-dehydroshikimate (DHSA) to yield shikimate (SA). The protein is Shikimate dehydrogenase (NADP(+)) of Cereibacter sphaeroides (strain KD131 / KCTC 12085) (Rhodobacter sphaeroides).